We begin with the raw amino-acid sequence, 253 residues long: Octanoyltransferase (253 aa).

The region spanning 47 to 236 (PETPDQVWLV…ALCEVLAARE (190 aa)) is the BPL/LPL catalytic domain. Substrate is bound by residues 87 to 94 (RGGQITYH), 159 to 161 (ALG), and 172 to 174 (GVS). Cys-190 (acyl-thioester intermediate) is an active-site residue.

It belongs to the LipB family.

Its subcellular location is the cytoplasm. It carries out the reaction octanoyl-[ACP] + L-lysyl-[protein] = N(6)-octanoyl-L-lysyl-[protein] + holo-[ACP] + H(+). It functions in the pathway protein modification; protein lipoylation via endogenous pathway; protein N(6)-(lipoyl)lysine from octanoyl-[acyl-carrier-protein]: step 1/2. In terms of biological role, catalyzes the transfer of endogenously produced octanoic acid from octanoyl-acyl-carrier-protein onto the lipoyl domains of lipoate-dependent enzymes. Lipoyl-ACP can also act as a substrate although octanoyl-ACP is likely to be the physiological substrate. This is Octanoyltransferase from Cupriavidus pinatubonensis (strain JMP 134 / LMG 1197) (Cupriavidus necator (strain JMP 134)).